A 127-amino-acid chain; its full sequence is Anti-adapter protein IraD (127 aa).

It belongs to the GpW/Gp25 family. IraD subfamily. Interacts with RssB.

It localises to the cytoplasm. Its function is as follows. Inhibits RpoS proteolysis by regulating RssB activity, thereby increasing the stability of the sigma stress factor RpoS during oxidative stress. Its effect on RpoS stability is due to its interaction with RssB, which probably blocks the interaction of RssB with RpoS, and the consequent delivery of the RssB-RpoS complex to the ClpXP protein degradation pathway. The protein is Anti-adapter protein IraD of Escherichia coli (strain UTI89 / UPEC).